Consider the following 155-residue polypeptide: Transcriptional repressor NrdR (155 aa).

A zinc finger spans residues Cys3–Cys34. An ATP-cone domain is found at Pro49–Glu139.

The protein belongs to the NrdR family. It depends on Zn(2+) as a cofactor.

Its function is as follows. Negatively regulates transcription of bacterial ribonucleotide reductase nrd genes and operons by binding to NrdR-boxes. This chain is Transcriptional repressor NrdR, found in Janthinobacterium sp. (strain Marseille) (Minibacterium massiliensis).